The sequence spans 360 residues: Phospho-N-acetylmuramoyl-pentapeptide-transferase (360 aa).

10 consecutive transmembrane segments (helical) span residues 26 to 46 (SIMALLTAMAIGLWIGPKVIN), 73 to 93 (TMGGIMILVSIGVSSLLWADL), 98 to 118 (VWFTLFVLFGYGIVGFVDDYW), 132 to 152 (WKYFWLSFIAFIAAFSMYAMG), 168 to 188 (VMPQLGLFYIILAYFVIVGTS), 199 to 219 (GLAIVPTIMVTAAFALIAWAT), 236 to 256 (SGELAIMCTAIVGAGLGFLWY), 263 to 283 (VFMGDVGSLSLGGALGVIAVL), 288 to 308 (LLLLVMGGVFVVEALSVILQV), and 338 to 358 (VIVRFWIITLVLVLVGLVTLK).

It belongs to the glycosyltransferase 4 family. MraY subfamily. Mg(2+) serves as cofactor.

It localises to the cell inner membrane. It catalyses the reaction UDP-N-acetyl-alpha-D-muramoyl-L-alanyl-gamma-D-glutamyl-meso-2,6-diaminopimeloyl-D-alanyl-D-alanine + di-trans,octa-cis-undecaprenyl phosphate = di-trans,octa-cis-undecaprenyl diphospho-N-acetyl-alpha-D-muramoyl-L-alanyl-D-glutamyl-meso-2,6-diaminopimeloyl-D-alanyl-D-alanine + UMP. It participates in cell wall biogenesis; peptidoglycan biosynthesis. Its function is as follows. Catalyzes the initial step of the lipid cycle reactions in the biosynthesis of the cell wall peptidoglycan: transfers peptidoglycan precursor phospho-MurNAc-pentapeptide from UDP-MurNAc-pentapeptide onto the lipid carrier undecaprenyl phosphate, yielding undecaprenyl-pyrophosphoryl-MurNAc-pentapeptide, known as lipid I. The sequence is that of Phospho-N-acetylmuramoyl-pentapeptide-transferase from Haemophilus ducreyi (strain 35000HP / ATCC 700724).